The following is a 60-amino-acid chain: DNA-directed RNA polymerase subunit Rpo6 (60 aa).

This sequence belongs to the archaeal Rpo6/eukaryotic RPB6 RNA polymerase subunit family. Part of the RNA polymerase complex.

It is found in the cytoplasm. It catalyses the reaction RNA(n) + a ribonucleoside 5'-triphosphate = RNA(n+1) + diphosphate. In terms of biological role, DNA-dependent RNA polymerase (RNAP) catalyzes the transcription of DNA into RNA using the four ribonucleoside triphosphates as substrates. This chain is DNA-directed RNA polymerase subunit Rpo6, found in Halobacterium salinarum (strain ATCC 700922 / JCM 11081 / NRC-1) (Halobacterium halobium).